The primary structure comprises 92 residues: Small ribosomal subunit protein uS19 (92 aa).

It belongs to the universal ribosomal protein uS19 family.

Functionally, protein S19 forms a complex with S13 that binds strongly to the 16S ribosomal RNA. The protein is Small ribosomal subunit protein uS19 (rpsS) of Synechocystis sp. (strain ATCC 27184 / PCC 6803 / Kazusa).